A 139-amino-acid chain; its full sequence is Large ribosomal subunit protein uL16 (139 aa).

This sequence belongs to the universal ribosomal protein uL16 family. Part of the 50S ribosomal subunit.

In terms of biological role, binds 23S rRNA and is also seen to make contacts with the A and possibly P site tRNAs. This chain is Large ribosomal subunit protein uL16, found in Protochlamydia amoebophila (strain UWE25).